A 237-amino-acid polypeptide reads, in one-letter code: Uridylate kinase (237 aa).

9–12 contacts ATP; the sequence is KLSG. G51 provides a ligand contact to UMP. ATP is bound by residues G52 and R56. UMP-binding positions include D71 and 132–139; that span reads CGNPFFTT. Positions 159, 165, and 168 each coordinate ATP.

It belongs to the UMP kinase family. In terms of assembly, homohexamer.

It localises to the cytoplasm. It carries out the reaction UMP + ATP = UDP + ADP. The protein operates within pyrimidine metabolism; CTP biosynthesis via de novo pathway; UDP from UMP (UMPK route): step 1/1. Its activity is regulated as follows. Inhibited by UTP. In terms of biological role, catalyzes the reversible phosphorylation of UMP to UDP. The protein is Uridylate kinase of Prochlorococcus marinus (strain SARG / CCMP1375 / SS120).